Reading from the N-terminus, the 58-residue chain is Small ribosomal subunit protein bS21 (58 aa).

The protein belongs to the bacterial ribosomal protein bS21 family.

In Prochlorococcus marinus (strain MIT 9301), this protein is Small ribosomal subunit protein bS21.